A 642-amino-acid polypeptide reads, in one-letter code: Nucleolar GTP-binding protein 1 (642 aa).

The 173-residue stretch at 168-340 (RTLLICGYPN…VRNKACEKLL (173 aa)) folds into the OBG-type G domain. GTP is bound by residues 174 to 181 (GYPNVGKS), 220 to 224 (DTPGI), and 288 to 291 (NKTD). Residues 585–642 (MDGVADASMRSKADRMAKLHRRERNRQARQGEADRHATASLPKHLFSGKRGIGSNDRR) are disordered. A compositionally biased stretch (basic and acidic residues) spans 609–621 (NRQARQGEADRHA).

This sequence belongs to the TRAFAC class OBG-HflX-like GTPase superfamily. OBG GTPase family. NOG subfamily.

Its subcellular location is the nucleus. It localises to the nucleolus. Functionally, involved in the biogenesis of the 60S ribosomal subunit. In Eremothecium gossypii (strain ATCC 10895 / CBS 109.51 / FGSC 9923 / NRRL Y-1056) (Yeast), this protein is Nucleolar GTP-binding protein 1 (NOG1).